The primary structure comprises 229 residues: Transcriptional regulatory protein YxdJ (229 aa).

The region spanning 3 to 116 (KIMIVEDSED…IVLAKIKSQI (114 aa)) is the Response regulatory domain. The residue at position 52 (D52) is a 4-aspartylphosphate. A DNA-binding region (ompR/PhoB-type) is located at residues 129 to 227 (EKVVEYAGVQ…VRGEGYQLRA (99 aa)).

Phosphorylated by YxdK.

It is found in the cytoplasm. Probable member of the two-component regulatory system YxdK/YxdJ. Positively regulates the expression of the yxdLMyxeA operon by direct interaction with its promoter region. Could also indirectly regulate the expression of the dlt operon. The sequence is that of Transcriptional regulatory protein YxdJ (yxdJ) from Bacillus subtilis (strain 168).